Reading from the N-terminus, the 175-residue chain is Protein FLOWERING LOCUS T (175 aa).

This sequence belongs to the phosphatidylethanolamine-binding protein family. As to quaternary structure, interacts with FD/BZIP14 and FDP/BZIP27. Interacts with FTIP1/MCTP1 in phloem companion cells. Interacts with NAKR1. As to expression, mostly localized in leaves vasculature.

The protein localises to the cytoplasm. The protein resides in the nucleus. It localises to the endoplasmic reticulum. Component of the mobile flower-promoting signal (floral stimulus or florigen). Promotes the transition from vegetative growth to flowering. Required for 'SEPALLATA3' (SEP3) and 'FRUITFULL' (FUL) accumulation in mature rosette leaves. Seems to acts in parallel with 'LEAFY' to induce flowering by regulating 'APETALA1'. Translated in leaves and then transported to the shoot apical meristem where it activates the transcription of several floral meristem identity genes. May play a role in both the autonomous and the long-day flowering pathways. The sequence is that of Protein FLOWERING LOCUS T from Arabidopsis thaliana (Mouse-ear cress).